The sequence spans 474 residues: PTS system MurNAc-GlcNAc-specific EIIBC component (474 aa).

The PTS EIIB type-1 domain maps to 5–87 (ERLAKDITHA…ADQSGATLAE (83 aa)). The active-site Phosphocysteine intermediate; for EIIB activity is cysteine 27. The PTS EIIC type-1 domain occupies 124–474 (KSIANIFIPL…GTTKEMRNPE (351 aa)). A run of 10 helical transmembrane segments spans residues 129–149 (IFIP…IAAI), 167–187 (IVTV…IFTG), 193–213 (VFGA…LTGI), 228–248 (LAAG…LSMV), 268–288 (ITLL…AGFV), 299–319 (IIGV…LPLV), 343–363 (LLPI…ALWV), 378–398 (ALPV…TLPL), 402–422 (FFTA…IGHI), and 444–464 (LGYI…TYFF).

Its subcellular location is the cell membrane. It carries out the reaction N-acetyl-beta-D-muramate-(1-&gt;4)-N-acetyl-D-glucosamine(out) + N(pros)-phospho-L-histidyl-[protein] = 6-phospho-N-acetyl-beta-D-muramate-(1-&gt;4)-N-acetyl-D-glucosamine(in) + L-histidyl-[protein]. It functions in the pathway cell wall biogenesis; peptidoglycan recycling. In terms of biological role, the phosphoenolpyruvate-dependent sugar phosphotransferase system (sugar PTS), a major carbohydrate active transport system, catalyzes the phosphorylation of incoming sugar substrates concomitantly with their translocation across the cell membrane. This system is involved in the uptake and phosphorylation of MurNAc-GlcNAc, the principle peptidoglycan turnover product of S.aureus, yielding cytoplasmic MurNAc 6P-GlcNAc. The sequence is that of PTS system MurNAc-GlcNAc-specific EIIBC component from Staphylococcus epidermidis (strain ATCC 35984 / DSM 28319 / BCRC 17069 / CCUG 31568 / BM 3577 / RP62A).